The chain runs to 564 residues: Cytochrome c oxidase subunit 1 (564 aa).

Residues M1–A23 are disordered. The next 7 membrane-spanning stretches (helical) occupy residues M43–I63, L83–F103, L122–L142, F171–I191, I214–G234, L259–V279, and F292–W312. Residue H87 coordinates Fe(II)-heme a. Residues H265 and Y269 each coordinate Cu cation. The segment at residues H265–Y269 is a cross-link (1'-histidyl-3'-tyrosine (His-Tyr)). Cu cation contacts are provided by H314 and H315. A run of 2 helical transmembrane segments spans residues M316–V336 and M360–L380. A heme a3-binding site is contributed by H398. 3 helical membrane passes run F399–F419, I434–G454, and I477–F497. Fe(II)-heme a is bound at residue H400.

Belongs to the heme-copper respiratory oxidase family. As to quaternary structure, associates with subunits II, III and IV to form cytochrome c oxidase. Cu(2+) serves as cofactor. The cofactor is heme.

Its subcellular location is the cell membrane. It carries out the reaction 4 Fe(II)-[cytochrome c] + O2 + 8 H(+)(in) = 4 Fe(III)-[cytochrome c] + 2 H2O + 4 H(+)(out). It participates in energy metabolism; oxidative phosphorylation. In terms of biological role, cytochrome c oxidase is the component of the respiratory chain that catalyzes the reduction of oxygen to water. Subunits 1-3 form the functional core of the enzyme complex. CO I is the catalytic subunit of the enzyme. Electrons originating in cytochrome c are transferred via the copper A center of subunit 2 and heme A of subunit 1 to the bimetallic center formed by heme A3 and copper B. This Corynebacterium diphtheriae (strain ATCC 700971 / NCTC 13129 / Biotype gravis) protein is Cytochrome c oxidase subunit 1 (ctaD).